An 806-amino-acid chain; its full sequence is DNA topoisomerase 1 (806 aa).

A compositionally biased stretch (low complexity) spans 1 to 15; it reads MSVVSNHHSNGNGNS. Residues 1–236 form a disordered region; the sequence is MSVVSNHHSN…KKEPPKKKVK (236 aa). Residues 24–34 are compositionally biased toward basic and acidic residues; the sequence is DEIKKEVKDEP. Basic residues-rich tracts occupy residues 49-60 and 98-108; these read RDKKEKKQKKRK and EKKKSKKNNKK. Positions 113–127 are enriched in acidic residues; sequence SSEDDDEESEGDVSE. Over residues 128–137 the composition is skewed to basic and acidic residues; sequence EDVKPQIHSD. A compositionally biased stretch (acidic residues) spans 138–153; that stretch reads DELEEEDEAPTTDDEE. Residues 159 to 176 show a composition bias toward basic residues; sequence EKERRKKEKREKKERKEK. A compositionally biased stretch (basic and acidic residues) spans 177–188; sequence KRLEKENRKIKE. Residues 189-199 show a composition bias toward acidic residues; it reads EDDEDSDDEDD. The segment covering 210–229 has biased composition (basic and acidic residues); sequence KGAEKSKPSTSKKDAGGKKE. Interaction with DNA stretches follow at residues 467-468, 530-535, and 634-636; these read KY, RAGNEK, and TVK. The 330-residue stretch at 474–803 folds into the Topo IB-type catalytic domain; that stretch reads SSKIKGEKDF…IDMTNSSDEE (330 aa). Tyr-761 functions as the O-(3'-phospho-DNA)-tyrosine intermediate in the catalytic mechanism.

It belongs to the type IB topoisomerase family. In terms of tissue distribution, expressed in male germ cells and in mature sperm.

The protein resides in the nucleus. It localises to the nucleolus. Its subcellular location is the chromosome. It carries out the reaction ATP-independent breakage of single-stranded DNA, followed by passage and rejoining.. Its function is as follows. Releases the supercoiling and torsional tension of DNA introduced during the DNA replication and transcription by transiently cleaving and rejoining one strand of the DNA duplex. Introduces a single-strand break via transesterification at a target site in duplex DNA. The scissile phosphodiester is attacked by the catalytic tyrosine of the enzyme, resulting in the formation of a DNA-(3'-phosphotyrosyl)-enzyme intermediate and the expulsion of a 5'-OH DNA strand. The free DNA strand then rotates around the intact phosphodiester bond on the opposing strand, thus removing DNA supercoils. Finally, in the religation step, the DNA 5'-OH attacks the covalent intermediate to expel the active-site tyrosine and restore the DNA phosphodiester backbone. Required for normal spermatogenesis and oogenesis. The sequence is that of DNA topoisomerase 1 (top-1) from Caenorhabditis elegans.